The primary structure comprises 169 residues: uncharacterized protein (169 aa).

This is an uncharacterized protein from Buchnera aphidicola subsp. Acyrthosiphon pisum (strain APS) (Acyrthosiphon pisum symbiotic bacterium).